The chain runs to 171 residues: ATP synthase subunit b (171 aa).

A helical membrane pass occupies residues 10 to 30; sequence GLYYGDSIFYAVCFLLLMWII.

The protein belongs to the ATPase B chain family. In terms of assembly, F-type ATPases have 2 components, F(1) - the catalytic core - and F(0) - the membrane proton channel. F(1) has five subunits: alpha(3), beta(3), gamma(1), delta(1), epsilon(1). F(0) has three main subunits: a(1), b(2) and c(10-14). The alpha and beta chains form an alternating ring which encloses part of the gamma chain. F(1) is attached to F(0) by a central stalk formed by the gamma and epsilon chains, while a peripheral stalk is formed by the delta and b chains.

It is found in the cell membrane. In terms of biological role, f(1)F(0) ATP synthase produces ATP from ADP in the presence of a proton or sodium gradient. F-type ATPases consist of two structural domains, F(1) containing the extramembraneous catalytic core and F(0) containing the membrane proton channel, linked together by a central stalk and a peripheral stalk. During catalysis, ATP synthesis in the catalytic domain of F(1) is coupled via a rotary mechanism of the central stalk subunits to proton translocation. Component of the F(0) channel, it forms part of the peripheral stalk, linking F(1) to F(0). The protein is ATP synthase subunit b of Levilactobacillus brevis (strain ATCC 367 / BCRC 12310 / CIP 105137 / JCM 1170 / LMG 11437 / NCIMB 947 / NCTC 947) (Lactobacillus brevis).